The primary structure comprises 632 residues: tRNA-guanine(15) transglycosylase (632 aa).

Asp-86 functions as the Nucleophile in the catalytic mechanism. The substrate site is built by Asp-121 and Gly-186. The PUA domain occupies 553 to 628; that stretch reads NLRVFVKNES…IAVKIHEGRD (76 aa).

It belongs to the archaeosine tRNA-ribosyltransferase family. Zn(2+) serves as cofactor.

It catalyses the reaction guanosine(15) in tRNA + 7-cyano-7-deazaguanine = 7-cyano-7-carbaguanosine(15) in tRNA + guanine. Its pathway is tRNA modification; archaeosine-tRNA biosynthesis. Its function is as follows. Exchanges the guanine residue with 7-cyano-7-deazaguanine (preQ0) at position 15 in the dihydrouridine loop (D-loop) of archaeal tRNAs. This Thermoplasma volcanium (strain ATCC 51530 / DSM 4299 / JCM 9571 / NBRC 15438 / GSS1) protein is tRNA-guanine(15) transglycosylase.